Consider the following 564-residue polypeptide: Probable diguanylate cyclase DgcQ (564 aa).

A run of 2 helical transmembrane segments spans residues 20–40 and 360–380; these read LGPGHIVNLCFIVVLLFSTLL and IALTLLWALFTTMLLISWYVI. The GGDEF domain occupies 428 to 563; sequence HPFSVIQVDL…GRNRVFASDN (136 aa). Asp436 is a binding site for Mg(2+). Substrate contacts are provided by Asn444, His449, and Asp453. Position 479 (Glu479) interacts with Mg(2+). Catalysis depends on Glu479, which acts as the Proton acceptor.

Homodimer. Mg(2+) is required as a cofactor.

The protein resides in the cell inner membrane. The enzyme catalyses 2 GTP = 3',3'-c-di-GMP + 2 diphosphate. It functions in the pathway glycan metabolism; bacterial cellulose biosynthesis. Its pathway is purine metabolism; 3',5'-cyclic di-GMP biosynthesis. Functionally, catalyzes the synthesis of cyclic-di-GMP (c-di-GMP) via the condensation of 2 GTP molecules. Cyclic-di-GMP is a second messenger which controls cell surface-associated traits in bacteria. Involved in the regulation of cellulose production. The chain is Probable diguanylate cyclase DgcQ from Escherichia coli O157:H7.